A 927-amino-acid chain; its full sequence is Calmodulin-binding transcription activator CBT (927 aa).

Positions 26–152 (YEKLVAEAAA…YRQTAEENAM (127 aa)) form a DNA-binding region, CG-1. The tract at residues 70-96 (LYDRKVVRNFRKDGHNWKKKKDGRTVQ) is necessary and sufficient for nuclear localization. The short motif at 72–79 (DRKVVRNF) is the Nuclear localization signal element. The stretch at 609 to 638 (SGWTALHWAAYHGRERMVATLLSAGANPSL) is one ANK repeat. IQ domains are found at residues 757 to 786 (EIVAAMKIQHAFRNYNRKKAMRAAARIQSH) and 799 to 828 (MRRQVIRIQAAYRGHQVRRQYRKVIWSVGI). The tract at residues 826–845 (VGIVEKAILRWRKKRKGLRG) is calmodulin-binding. The tract at residues 830 to 851 (EKAILRWRKKRKGLRGIASGMP) is necessary and sufficient for nuclear localization. Positions 882 to 911 (FNRSVVRVQALFRSYKAQQEYRRMKIAHEE) constitute an IQ 3 domain.

The protein belongs to the CAMTA family.

The protein resides in the nucleus. With respect to regulation, transcriptional activation activity is strongly reduced by calmodulin. In terms of biological role, transcription activator that binds calmodulin in a calcium-dependent manner in vitro. Binds to the DNA consensus sequence 5'-T[AC]CG[CT]GT[GT][GT][GT][GT]T[GT]CG-3'. The polypeptide is Calmodulin-binding transcription activator CBT (Oryza sativa subsp. japonica (Rice)).